Consider the following 126-residue polypeptide: Fluoride-specific ion channel FluC (126 aa).

4 helical membrane-spanning segments follow: residues 5-25 (ILVA…GAGV), 37-57 (VAIM…VVWA), 65-85 (LSPF…AFSL), and 101-121 (LYVA…LWVA). Glycine 75 and threonine 78 together coordinate Na(+).

This sequence belongs to the fluoride channel Fluc/FEX (TC 1.A.43) family.

The protein resides in the cell inner membrane. It catalyses the reaction fluoride(in) = fluoride(out). Its activity is regulated as follows. Na(+) is not transported, but it plays an essential structural role and its presence is essential for fluoride channel function. Fluoride-specific ion channel. Important for reducing fluoride concentration in the cell, thus reducing its toxicity. This Roseobacter denitrificans (strain ATCC 33942 / OCh 114) (Erythrobacter sp. (strain OCh 114)) protein is Fluoride-specific ion channel FluC.